Reading from the N-terminus, the 253-residue chain is tRNA pseudouridine synthase A (253 aa).

Catalysis depends on D52, which acts as the Nucleophile. Substrate is bound at residue Y111.

This sequence belongs to the tRNA pseudouridine synthase TruA family. In terms of assembly, homodimer.

The catalysed reaction is uridine(38/39/40) in tRNA = pseudouridine(38/39/40) in tRNA. Its function is as follows. Formation of pseudouridine at positions 38, 39 and 40 in the anticodon stem and loop of transfer RNAs. The protein is tRNA pseudouridine synthase A of Methylobacterium radiotolerans (strain ATCC 27329 / DSM 1819 / JCM 2831 / NBRC 15690 / NCIMB 10815 / 0-1).